The primary structure comprises 314 residues: Electron transfer flavoprotein subunit alpha (314 aa).

253-281 (LYVAVGISGAIQHLAGMKDSKVIVAINKD) is an FAD binding site.

Belongs to the ETF alpha-subunit/FixB family. Heterodimer of an alpha and a beta subunit. It depends on FAD as a cofactor.

The electron transfer flavoprotein serves as a specific electron acceptor for other dehydrogenases. It transfers the electrons to the main respiratory chain via ETF-ubiquinone oxidoreductase (ETF dehydrogenase). The sequence is that of Electron transfer flavoprotein subunit alpha (etfA) from Bradyrhizobium diazoefficiens (strain JCM 10833 / BCRC 13528 / IAM 13628 / NBRC 14792 / USDA 110).